A 111-amino-acid polypeptide reads, in one-letter code: Irditoxin subunit B (111 aa).

A signal peptide spans 1–19 (MKTLLLAVAVVAFVCLGSA). The propeptide occupies 20–34 (DQLGLGRQQIDWGKG). Gln35 carries the pyrrolidone carboxylic acid modification. Cystine bridges form between Cys44/Cys68, Cys47/Cys55, Cys61/Cys87, Cys91/Cys102, and Cys103/Cys108.

This sequence belongs to the three-finger toxin family. Ancestral subfamily. Boigatoxin sub-subfamily. As to quaternary structure, heterodimer of A and B chains; disulfide-linked. In terms of tissue distribution, expressed by the venom gland.

The protein resides in the secreted. In terms of biological role, this bird and reptile-specific postsynaptic neurotoxin inhibits the chick muscle alpha-1-beta-1-gamma-delta (CHRNA1-CHRNB1-CHRNG-CHRND) nicotinic acetylcholine receptor (nAChR) 100-fold more compared with the mouse receptor. In vivo, produces rapid flaccid paralysis, dyspnea and increased respiratory rate in geckos. At sublethal doses geckos were immobilized for up to three days and then recovered. Chicks injected with lethal doses showed rapid onset of inactivity, dyspnea and neck droop, and no extended paralysis with survival was seen. The protein is Irditoxin subunit B of Boiga irregularis (Brown tree snake).